The chain runs to 674 residues: Glutaminase kidney isoform, mitochondrial (674 aa).

The transit peptide at 1 to 54 (MMRLRGSAMLRELLLRPPAAVGAVLRRAQPLGTLCRRPRGGSRPTAGLVAAARL) directs the protein to the mitochondrion. Residues 56-123 (PWWGGGGRAK…PGETDAFGNS (68 aa)) are disordered. Residues 58–71 (WGGGGRAKGPGAGG) are compositionally biased toward gly residues. Low complexity predominate over residues 89 to 101 (PPQQQQQQQQQPG). Residues K135 and K169 each carry the N6-succinyllysine modification. S291 contacts substrate. At K316 the chain carries N6-acetyllysine. The tract at residues 320 to 327 (GLRFNKLF) is highly mobile activation loop. Substrate contacts are provided by N340, E386, N393, Y419, Y471, and V489. ANK repeat units lie at residues 590-619 (DSRT…VNPF) and 624-653 (WNNT…QYTP). The tract at residues 652-674 (TPQGDSDDGKGNQTVHKNLDGLL) is disordered. Position 657 is a phosphoserine (S657).

Belongs to the glutaminase family. Homotetramer, dimer of dimers. The tetramers can assemble into rod-like oligomers (in vitro), but the physiological significance of this is not clear. Interacts with RAF1 and MAP2K2. Interacts with ATCAY; the interaction is direct and may control GLS localization, negatively regulating its activity. In terms of processing, synthesized as a 74-kDa cytosolic precursor which is proteolytically processed by the mitochondrial-processing peptidase (MPP) via a 72-kDa intermediate to yield the mature mitochondrial 68- and 65-kDa subunits.

The protein resides in the mitochondrion. It localises to the cytoplasm. It is found in the cytosol. Its subcellular location is the mitochondrion matrix. It catalyses the reaction L-glutamine + H2O = L-glutamate + NH4(+). Isoform 1 and isoform 2 are activated by phosphate, due to increased affinity for glutamine. At phosphate concentrations above 10 mM, isoform 2 is more efficient than isoform 1. In terms of biological role, catalyzes the first reaction in the primary pathway for the renal catabolism of glutamine. Plays a role in maintaining acid-base homeostasis. Regulates the levels of the neurotransmitter glutamate, the main excitatory neurotransmitter in the brain. This chain is Glutaminase kidney isoform, mitochondrial (Gls), found in Mus musculus (Mouse).